Reading from the N-terminus, the 248-residue chain is Probable transcriptional regulatory protein Ecaj_0351 (248 aa).

The tract at residues 1-21 (MAGHSQFANIKHRKGAQDAKR) is disordered.

Belongs to the TACO1 family.

The protein localises to the cytoplasm. The protein is Probable transcriptional regulatory protein Ecaj_0351 of Ehrlichia canis (strain Jake).